The primary structure comprises 270 residues: tRNA pseudouridine synthase B (270 aa).

Residue Asp-49 is the Nucleophile of the active site.

This sequence belongs to the pseudouridine synthase TruB family. Type 1 subfamily.

The enzyme catalyses uridine(55) in tRNA = pseudouridine(55) in tRNA. Its function is as follows. Responsible for synthesis of pseudouridine from uracil-55 in the psi GC loop of transfer RNAs. The sequence is that of tRNA pseudouridine synthase B from Bartonella quintana (strain Toulouse) (Rochalimaea quintana).